The chain runs to 281 residues: Putative E3 ubiquitin-protein ligase SINA-like 6 (281 aa).

The disordered stretch occupies residues 1–26 (MVGVLLSERNGSQKRHCSSISSDDGR). The RING-type zinc finger occupies 45-81 (CPICYQALKIPVFQCGNGHLACSSCCPKLRNKCPACA). The interval 95–280 (VLESVLVPCR…MMLCINELKQ (186 aa)) is SBD. An SIAH-type zinc finger spans residues 98–156 (SVLVPCRYADLGCTKTIYYGRESTHEKICNFSPCSCPVQGCNYTGSYKDLYEHYDLTHS). 8 residues coordinate Zn(2+): C103, C110, H122, C126, C133, C138, H150, and H155.

This sequence belongs to the SINA (Seven in absentia) family.

The catalysed reaction is S-ubiquitinyl-[E2 ubiquitin-conjugating enzyme]-L-cysteine + [acceptor protein]-L-lysine = [E2 ubiquitin-conjugating enzyme]-L-cysteine + N(6)-ubiquitinyl-[acceptor protein]-L-lysine.. Its pathway is protein modification; protein ubiquitination. In terms of biological role, E3 ubiquitin-protein ligase that mediates ubiquitination and subsequent proteasomal degradation of target proteins. E3 ubiquitin ligases accept ubiquitin from an E2 ubiquitin-conjugating enzyme in the form of a thioester and then directly transfers the ubiquitin to targeted substrates. It probably triggers the ubiquitin-mediated degradation of different substrates. The sequence is that of Putative E3 ubiquitin-protein ligase SINA-like 6 from Arabidopsis thaliana (Mouse-ear cress).